A 379-amino-acid chain; its full sequence is Carbamoyl phosphate synthase small chain (379 aa).

The segment at 1–184 (MVSLYLENGL…LDYKPFDEKN (184 aa)) is CPSase. L-glutamine-binding residues include Ser-44, Gly-240, and Gly-242. One can recognise a Glutamine amidotransferase type-1 domain in the interval 188-378 (TIAVLDFGAK…VKLLENFPTR (191 aa)). Catalysis depends on Cys-268, which acts as the Nucleophile. 4 residues coordinate L-glutamine: Leu-269, Gln-272, Asn-310, and Tyr-313. Active-site residues include His-351 and Glu-353.

This sequence belongs to the CarA family. In terms of assembly, composed of two chains; the small (or glutamine) chain promotes the hydrolysis of glutamine to ammonia, which is used by the large (or ammonia) chain to synthesize carbamoyl phosphate. Tetramer of heterodimers (alpha,beta)4.

The catalysed reaction is hydrogencarbonate + L-glutamine + 2 ATP + H2O = carbamoyl phosphate + L-glutamate + 2 ADP + phosphate + 2 H(+). It catalyses the reaction L-glutamine + H2O = L-glutamate + NH4(+). It functions in the pathway amino-acid biosynthesis; L-arginine biosynthesis; carbamoyl phosphate from bicarbonate: step 1/1. Its pathway is pyrimidine metabolism; UMP biosynthesis via de novo pathway; (S)-dihydroorotate from bicarbonate: step 1/3. Its function is as follows. Small subunit of the glutamine-dependent carbamoyl phosphate synthetase (CPSase). CPSase catalyzes the formation of carbamoyl phosphate from the ammonia moiety of glutamine, carbonate, and phosphate donated by ATP, constituting the first step of 2 biosynthetic pathways, one leading to arginine and/or urea and the other to pyrimidine nucleotides. The small subunit (glutamine amidotransferase) binds and cleaves glutamine to supply the large subunit with the substrate ammonia. In Helicobacter acinonychis (strain Sheeba), this protein is Carbamoyl phosphate synthase small chain.